The primary structure comprises 238 residues: Large ribosomal subunit protein uL2 (238 aa).

Polar residues predominate over residues 1–11 (MGKRLISQNRG). Disordered regions lie at residues 1 to 22 (MGKR…APSH) and 202 to 223 (FGGG…APPG).

This sequence belongs to the universal ribosomal protein uL2 family. Part of the 50S ribosomal subunit. Forms a bridge to the 30S subunit in the 70S ribosome.

One of the primary rRNA binding proteins. Required for association of the 30S and 50S subunits to form the 70S ribosome, for tRNA binding and peptide bond formation. It has been suggested to have peptidyltransferase activity; this is somewhat controversial. Makes several contacts with the 16S rRNA in the 70S ribosome. This is Large ribosomal subunit protein uL2 from Methanosarcina acetivorans (strain ATCC 35395 / DSM 2834 / JCM 12185 / C2A).